The following is a 696-amino-acid chain: Probable E3 ubiquitin ligase complex SCF subunit sconB (696 aa).

The segment covering 1–12 (MDAHELSFRDGH) has biased composition (basic and acidic residues). Residues 1 to 72 (MDAHELSFRD…HSFNTQKPIR (72 aa)) form a disordered region. Residues 55 to 69 (PGSTQDKPHSFNTQK) show a composition bias toward polar residues. In terms of domain architecture, F-box spans 193–239 (IDFLTALPPEISFKILCYLDTTSLCKAAQVSRRWRALADDDVVWHRM). The tract at residues 290 to 314 (SATIETAAAGSKRKPESGKEDTAMV) is disordered. The span at 302–313 (RKPESGKEDTAM) shows a compositional bias: basic and acidic residues. WD repeat units follow at residues 365-402 (GHSN…ELRT), 405-444 (GHQS…STYS), 446-482 (HRGG…TCLL), 484-525 (GHTD…RTFH), 579-622 (DTPS…CLRT), 623-662 (FFGH…CERT), and 665-696 (GHSG…SFQT). Residues 554–596 (NVSVTSGDSPAASPQALPGFDGQTSDTPSSAFGPAFDDGRPSP) form a disordered region.

The protein belongs to the WD repeat MET30/SCONB/SCON-2 family. Component of the SCF(sconB) E3 ubiquitin ligase complex.

The protein operates within protein modification; protein ubiquitination. Functionally, component of the SCF(sconB) E3 ubiquitin ligase complex involved in the regulation of sulfur metabolite repression, probably by mediating the inactivation or degradation of the metR transcription factor. The sequence is that of Probable E3 ubiquitin ligase complex SCF subunit sconB (sconB) from Aspergillus fumigatus (strain ATCC MYA-4609 / CBS 101355 / FGSC A1100 / Af293) (Neosartorya fumigata).